Consider the following 1071-residue polypeptide: ATP-dependent helicase/deoxyribonuclease subunit B (1071 aa).

Belongs to the helicase family. AddB/RexB type 2 subfamily. In terms of assembly, heterodimer of AddA and RexB. Mg(2+) is required as a cofactor.

Its function is as follows. The heterodimer acts as both an ATP-dependent DNA helicase and an ATP-dependent, dual-direction single-stranded exonuclease. Recognizes the chi site generating a DNA molecule suitable for the initiation of homologous recombination. This subunit has 5' -&gt; 3' nuclease activity but not helicase activity. The polypeptide is ATP-dependent helicase/deoxyribonuclease subunit B (Streptococcus pyogenes serotype M12 (strain MGAS2096)).